The chain runs to 160 residues: Cytochrome b6-f complex subunit 4 (160 aa).

Helical transmembrane passes span 36 to 56 (LLYIFPVVILGTIACTIGLAV), 95 to 115 (LLGVLLMASVPVGLLTVPFLE), and 131 to 151 (TVFLIGTAVAIWLGIGAALPI).

This sequence belongs to the cytochrome b family. PetD subfamily. The 4 large subunits of the cytochrome b6-f complex are cytochrome b6, subunit IV (17 kDa polypeptide, petD), cytochrome f and the Rieske protein, while the 4 small subunits are petG, petL, petM and petN. The complex functions as a dimer.

It localises to the plastid. The protein resides in the chloroplast thylakoid membrane. In terms of biological role, component of the cytochrome b6-f complex, which mediates electron transfer between photosystem II (PSII) and photosystem I (PSI), cyclic electron flow around PSI, and state transitions. In Chara vulgaris (Common stonewort), this protein is Cytochrome b6-f complex subunit 4.